We begin with the raw amino-acid sequence, 425 residues long: Enolase (425 aa).

Gln165 lines the (2R)-2-phosphoglycerate pocket. Glu207 functions as the Proton donor in the catalytic mechanism. Mg(2+) contacts are provided by Asp244, Glu285, and Asp312. Residues Lys337, Arg366, Ser367, and Lys388 each coordinate (2R)-2-phosphoglycerate. Residue Lys337 is the Proton acceptor of the active site.

Belongs to the enolase family. Mg(2+) is required as a cofactor.

Its subcellular location is the cytoplasm. The protein localises to the secreted. The protein resides in the cell surface. The enzyme catalyses (2R)-2-phosphoglycerate = phosphoenolpyruvate + H2O. Its pathway is carbohydrate degradation; glycolysis; pyruvate from D-glyceraldehyde 3-phosphate: step 4/5. Functionally, catalyzes the reversible conversion of 2-phosphoglycerate (2-PG) into phosphoenolpyruvate (PEP). It is essential for the degradation of carbohydrates via glycolysis. This is Enolase from Wolbachia sp. subsp. Brugia malayi (strain TRS).